The chain runs to 937 residues: Coiled-coil domain-containing protein 39 (937 aa).

4 coiled-coil regions span residues 16-137 (AIPV…CQMN), 165-339 (QQDD…KKDI), 365-615 (EKTL…SQIR), and 664-816 (VIKA…LKQT). A disordered region spans residues 866–937 (LPTARGPSSR…NIPKEKKLSK (72 aa)). The span at 873–887 (SSRSSSQSSSLSSFR) shows a compositional bias: low complexity. Phosphoserine is present on residues Ser-888 and Ser-896. Positions 915–928 (NDSSRSASSGSNSN) are enriched in low complexity.

This sequence belongs to the CCDC39 family. Strongly expressed in tissues rich in ciliated cells. Expressed in olfactory and vomeronasal sensory neurons and the respiratory epithelium. Expressed in node cells carrying motile cilia, in upper and lower airways, and in ependymal and choroid plexus cells.

The protein resides in the cytoplasm. Its subcellular location is the cytoskeleton. The protein localises to the cilium axoneme. In terms of biological role, required for assembly of dynein regulatory complex (DRC) and inner dynein arm (IDA) complexes, which are responsible for ciliary beat regulation, thereby playing a central role in motility in cilia and flagella. Probably acts together with CCDC40 to form a molecular ruler that determines the 96 nanometer (nm) repeat length and arrangements of components in cilia and flagella. Not required for outer dynein arm complexes assembly. This is Coiled-coil domain-containing protein 39 from Mus musculus (Mouse).